A 434-amino-acid polypeptide reads, in one-letter code: Protein ENHANCED PSEUDOMONAS SUSCEPTIBILITY 1 (434 aa).

The Proton acceptor role is filled by Asp376.

This sequence belongs to the plant acyltransferase family.

In terms of biological role, required for pathogen-induced salicylic acid (SA) accumulation and SA-mediated resistance to virulent and avirulent pathogens (e.g. P.syringae). The sequence is that of Protein ENHANCED PSEUDOMONAS SUSCEPTIBILITY 1 from Arabidopsis thaliana (Mouse-ear cress).